Here is a 607-residue protein sequence, read N- to C-terminus: Leucine-rich repeat-containing protein 63 (607 aa).

LRR repeat units lie at residues 357-378 (QLVYLNLSYNDLHQFPGEVLYL), 380-401 (NLQVLKLRNNPIREIPSEIQQL), 403-424 (YLRKFTIAFNFITSLPAGLFCL), 426-447 (YLEELDVSYNEIENIPNEIQKL), 449-470 (SLEKLTVDGTNITAFPPGILKL), 471-497 (NLVKLEFENTFTIPPFWLENSCNNPPR), and 498-524 (LTHICSLFIVKNNLHKILDYDPVVVQK).

This is Leucine-rich repeat-containing protein 63 (Lrrc63) from Rattus norvegicus (Rat).